A 369-amino-acid polypeptide reads, in one-letter code: Anhydro-N-acetylmuramic acid kinase (369 aa).

12–19 (GTSMDGVD) contacts ATP.

Belongs to the anhydro-N-acetylmuramic acid kinase family.

It carries out the reaction 1,6-anhydro-N-acetyl-beta-muramate + ATP + H2O = N-acetyl-D-muramate 6-phosphate + ADP + H(+). Its pathway is amino-sugar metabolism; 1,6-anhydro-N-acetylmuramate degradation. It functions in the pathway cell wall biogenesis; peptidoglycan recycling. Its function is as follows. Catalyzes the specific phosphorylation of 1,6-anhydro-N-acetylmuramic acid (anhMurNAc) with the simultaneous cleavage of the 1,6-anhydro ring, generating MurNAc-6-P. Is required for the utilization of anhMurNAc either imported from the medium or derived from its own cell wall murein, and thus plays a role in cell wall recycling. In Shewanella sp. (strain W3-18-1), this protein is Anhydro-N-acetylmuramic acid kinase.